Consider the following 64-residue polypeptide: uncharacterized protein (64 aa).

Residues 41–61 (VFLALKVLGIMVLFYLLDAII) form a helical membrane-spanning segment.

The protein localises to the membrane. This is an uncharacterized protein from Acheta domesticus (House cricket).